Here is a 635-residue protein sequence, read N- to C-terminus: CCR4-NOT transcription complex subunit 10 (635 aa).

Phosphothreonine is present on threonine 45. Residues 131–165 (LVARLEALEKAMAALVATLQLQLLLATNQLNRAEA) are a coiled coil. 2 disordered regions span residues 396–416 (EERQSQSETPSTKPYAPQSAG) and 450–474 (SEDVEAPEPKDPTQESWRHPQDNNF). Basic and acidic residues predominate over residues 456–470 (PEPKDPTQESWRHPQ).

The protein belongs to the CNOT10 family. As to quaternary structure, component of the CCR4-NOT complex. CNOT10 and CNOT11 form a subcomplex docked to the CNOT1 scaffold.

The protein localises to the cytoplasm. It is found in the nucleus. Functionally, component of the CCR4-NOT complex which is one of the major cellular mRNA deadenylases and is linked to various cellular processes including bulk mRNA degradation, miRNA-mediated repression, translational repression during translational initiation and general transcription regulation. Additional complex functions may be a consequence of its influence on mRNA expression. Is not required for association of CNOT7 to the CCR4-NOT complex. The polypeptide is CCR4-NOT transcription complex subunit 10 (Not10) (Drosophila melanogaster (Fruit fly)).